The primary structure comprises 160 residues: Troponin C, skeletal muscle (160 aa).

T2 carries the N-acetylthreonine modification. EF-hand domains lie at 15 to 50 (EMIA…LGQT), 51 to 86 (PTKE…QMKE), 91 to 126 (KSEE…SGEH), and 127 to 160 (VTEE…EGVQ). Ca(2+)-binding residues include D28, D30, D34, E39, D64, D66, S68, T70, E75, D104, N106, D108, Y110, E115, D140, N142, D144, R146, and E151.

The protein belongs to the troponin C family. Fast skeletal muscle.

In terms of biological role, troponin is the central regulatory protein of striated muscle contraction. Tn consists of three components: Tn-I which is the inhibitor of actomyosin ATPase, Tn-T which contains the binding site for tropomyosin and Tn-C. The binding of calcium to Tn-C abolishes the inhibitory action of Tn on actin filaments. The sequence is that of Troponin C, skeletal muscle (Tnnc2) from Mus musculus (Mouse).